A 1288-amino-acid chain; its full sequence is Symplekin (1288 aa).

Residues 1-124 (MASSSGDSVT…NMLLRDENVN (124 aa)) form an interaction with HSF1 region. S13 is subject to Phosphoserine. 5 HEAT repeats span residues 31 to 64 (TTSERVVDLLNQAALITNDSKITVLKQVQELIIN), 67 to 101 (PTLLDNFLDEIIAFQADKSIEVRKFVIGFIEEACK), 104 to 146 (IELL…WMVK), 153 to 192 (LQEACWDMVSSMAGEIILLLDSDNDGIRTHAIKFVEGLIV), and 227 to 266 (VLWEEGKAAVEQLLKFMVHPAISSINLTTALGSLANIARQ). A disordered region spans residues 335–392 (IARNMPSSKDSRKRPRDDTDSTLKKMKLEPNLGEDDEDKDLEPGPSGTSKASAQISGQ). The Nuclear localization signal motif lies at 345 to 360 (SRKRPRDDTDSTLKKM). Positions 349-362 (PRDDTDSTLKKMKL) are enriched in basic and acidic residues. K361 participates in a covalent cross-link: Glycyl lysine isopeptide (Lys-Gly) (interchain with G-Cter in SUMO1); alternate. A Glycyl lysine isopeptide (Lys-Gly) (interchain with G-Cter in SUMO2); alternate cross-link involves residue K361. A compositionally biased stretch (polar residues) spans 380-392 (SGTSKASAQISGQ). Residue K483 forms a Glycyl lysine isopeptide (Lys-Gly) (interchain with G-Cter in SUMO2) linkage. At S494 the chain carries Phosphoserine. Disordered regions lie at residues 1130–1151 (PAPAPAPAPAPAPAPAPRPPQD) and 1163–1288 (LKRQ…KGNS). Residues 1131 to 1149 (APAPAPAPAPAPAPAPRPP) show a composition bias toward pro residues. Basic and acidic residues predominate over residues 1163–1173 (LKRQLEEEQKQ). Residues S1238 and S1239 each carry the phosphoserine modification. A Glycyl lysine isopeptide (Lys-Gly) (interchain with G-Cter in SUMO1) cross-link involves residue K1256. S1260 is subject to Phosphoserine. The span at 1267–1288 (AVEEALKTSSPETREPESKGNS) shows a compositional bias: basic and acidic residues. At T1274 the chain carries Phosphothreonine. S1276 bears the Phosphoserine mark.

This sequence belongs to the Symplekin family. In terms of assembly, found in a heat-sensitive complex at least composed of several cleavage and polyadenylation specific and cleavage stimulation factors. Interacts with CPSF2, CPSF3 and CSTF2. Interacts (via N-terminus) with HSF1; this interaction is direct and occurs upon heat shock. Interacts with SSU72.

It localises to the cytoplasm. The protein localises to the cytoskeleton. The protein resides in the cell junction. Its subcellular location is the tight junction. It is found in the cell membrane. It localises to the nucleus. The protein localises to the nucleoplasm. Scaffold protein that functions as a component of a multimolecular complex involved in histone mRNA 3'-end processing. Specific component of the tight junction (TJ) plaque, but might not be an exclusively junctional component. May have a house-keeping rule. Is involved in pre-mRNA polyadenylation. Enhances SSU72 phosphatase activity. The polypeptide is Symplekin (Sympk) (Mus musculus (Mouse)).